Reading from the N-terminus, the 162-residue chain is Ribosomal RNA large subunit methyltransferase H (162 aa).

Residues leucine 78, glycine 109, and 128-133 (LSALTL) each bind S-adenosyl-L-methionine.

Belongs to the RNA methyltransferase RlmH family. In terms of assembly, homodimer.

The protein localises to the cytoplasm. The enzyme catalyses pseudouridine(1915) in 23S rRNA + S-adenosyl-L-methionine = N(3)-methylpseudouridine(1915) in 23S rRNA + S-adenosyl-L-homocysteine + H(+). Its function is as follows. Specifically methylates the pseudouridine at position 1915 (m3Psi1915) in 23S rRNA. The polypeptide is Ribosomal RNA large subunit methyltransferase H (Psychrobacter arcticus (strain DSM 17307 / VKM B-2377 / 273-4)).